The following is a 117-amino-acid chain: Immunoglobulin kappa variable 1-39 (117 aa).

Residues 1–22 (MDMRVPAQLLGLLLLWLRGARC) form the signal peptide. The segment at 23–45 (DIQMTQSPSSLSASVGDRVTITC) is framework-1. In terms of domain architecture, Ig-like spans 24-117 (IQMTQSPSSL…YYCQQSYSTP (94 aa)). A disulfide bond links Cys-45 and Cys-110. A complementarity-determining-1 region spans residues 46–56 (RASQSISSYLN). The tract at residues 57 to 71 (WYQQKPGKAPKLLIY) is framework-2. The complementarity-determining-2 stretch occupies residues 72–78 (AASSLQS). Positions 79–110 (GVPSRFSGSGSGTDFTLTISSLQPEDFATYYC) are framework-3. The tract at residues 111 to 117 (QQSYSTP) is complementarity-determining-3.

As to quaternary structure, immunoglobulins are composed of two identical heavy chains and two identical light chains; disulfide-linked.

It is found in the secreted. It localises to the cell membrane. Its function is as follows. V region of the variable domain of immunoglobulin light chains that participates in the antigen recognition. Immunoglobulins, also known as antibodies, are membrane-bound or secreted glycoproteins produced by B lymphocytes. In the recognition phase of humoral immunity, the membrane-bound immunoglobulins serve as receptors which, upon binding of a specific antigen, trigger the clonal expansion and differentiation of B lymphocytes into immunoglobulins-secreting plasma cells. Secreted immunoglobulins mediate the effector phase of humoral immunity, which results in the elimination of bound antigens. The antigen binding site is formed by the variable domain of one heavy chain, together with that of its associated light chain. Thus, each immunoglobulin has two antigen binding sites with remarkable affinity for a particular antigen. The variable domains are assembled by a process called V-(D)-J rearrangement and can then be subjected to somatic hypermutations which, after exposure to antigen and selection, allow affinity maturation for a particular antigen. This is Immunoglobulin kappa variable 1-39 from Homo sapiens (Human).